Here is a 253-residue protein sequence, read N- to C-terminus: Succinate dehydrogenase iron-sulfur subunit (253 aa).

Residues Cys-64, Cys-69, and Cys-84 each contribute to the [2Fe-2S] cluster site. Residues 146-174 (RQWAYELSKCMTCGVCLEACPNVNSKSKF) enclose the 4Fe-4S ferredoxin-type domain. Cys-155, Cys-158, and Cys-161 together coordinate [4Fe-4S] cluster. [3Fe-4S] cluster-binding residues include Cys-165, Cys-212, and Cys-218. Cys-222 provides a ligand contact to [4Fe-4S] cluster.

This sequence belongs to the succinate dehydrogenase/fumarate reductase iron-sulfur protein family. In terms of assembly, in B.subtilis succinate dehydrogenase forms part of an enzyme complex containing three subunits: a flavoprotein, an iron-sulfur protein and cytochrome b-558. It depends on [2Fe-2S] cluster as a cofactor. [3Fe-4S] cluster serves as cofactor. Requires [4Fe-4S] cluster as cofactor.

The catalysed reaction is a quinone + succinate = fumarate + a quinol. It participates in carbohydrate metabolism; tricarboxylic acid cycle; fumarate from succinate (bacterial route): step 1/1. The chain is Succinate dehydrogenase iron-sulfur subunit (sdhB) from Bacillus subtilis (strain 168).